The chain runs to 65 residues: Large ribosomal subunit protein bL35 (65 aa).

It belongs to the bacterial ribosomal protein bL35 family.

The chain is Large ribosomal subunit protein bL35 from Nitrosomonas eutropha (strain DSM 101675 / C91 / Nm57).